The sequence spans 358 residues: Low-specificity L-threonine aldolase 1 (358 aa).

K207 carries the post-translational modification N6-(pyridoxal phosphate)lysine.

The protein belongs to the threonine aldolase family. Requires pyridoxal 5'-phosphate as cofactor. Expressed in root tips, seedlings, carpels and seeds.

It carries out the reaction L-threonine = acetaldehyde + glycine. It catalyses the reaction L-allo-threonine = acetaldehyde + glycine. Its pathway is amino-acid degradation; L-threonine degradation via aldolase pathway; acetaldehyde and glycine from L-threonine: step 1/1. Threonine aldolase involved in threonine degradation to glycine. May play a role in the removal of L-allo-threonine. The chain is Low-specificity L-threonine aldolase 1 from Arabidopsis thaliana (Mouse-ear cress).